A 719-amino-acid polypeptide reads, in one-letter code: Fatty acid oxidation complex subunit alpha (719 aa).

The segment at 1–190 is enoyl-CoA hydratase/isomerase; sequence MVYQGNRITV…KLGLVDATVA (190 aa). Asp298 lines the substrate pocket. Residues 313–719 form a 3-hydroxyacyl-CoA dehydrogenase region; it reads HDINEAAVLG…AAGETFYATA (407 aa). NAD(+)-binding positions include Met326, Asp345, 402–404, Lys409, and Ser431; that span reads VVE. Residue His452 is the For 3-hydroxyacyl-CoA dehydrogenase activity of the active site. Asn455 lines the NAD(+) pocket. Asn502 lines the substrate pocket.

This sequence in the N-terminal section; belongs to the enoyl-CoA hydratase/isomerase family. The protein in the C-terminal section; belongs to the 3-hydroxyacyl-CoA dehydrogenase family. As to quaternary structure, heterotetramer of two alpha chains (FadB) and two beta chains (FadA).

It catalyses the reaction a (3S)-3-hydroxyacyl-CoA + NAD(+) = a 3-oxoacyl-CoA + NADH + H(+). It carries out the reaction a (3S)-3-hydroxyacyl-CoA = a (2E)-enoyl-CoA + H2O. The catalysed reaction is a 4-saturated-(3S)-3-hydroxyacyl-CoA = a (3E)-enoyl-CoA + H2O. The enzyme catalyses (3S)-3-hydroxybutanoyl-CoA = (3R)-3-hydroxybutanoyl-CoA. It catalyses the reaction a (3Z)-enoyl-CoA = a 4-saturated (2E)-enoyl-CoA. It carries out the reaction a (3E)-enoyl-CoA = a 4-saturated (2E)-enoyl-CoA. It functions in the pathway lipid metabolism; fatty acid beta-oxidation. Functionally, involved in the aerobic and anaerobic degradation of long-chain fatty acids via beta-oxidation cycle. Catalyzes the formation of 3-oxoacyl-CoA from enoyl-CoA via L-3-hydroxyacyl-CoA. It can also use D-3-hydroxyacyl-CoA and cis-3-enoyl-CoA as substrate. The protein is Fatty acid oxidation complex subunit alpha of Psychrobacter cryohalolentis (strain ATCC BAA-1226 / DSM 17306 / VKM B-2378 / K5).